We begin with the raw amino-acid sequence, 569 residues long: MGGHEGFSNQRLSSATWFSHFRASALRSKSLPPPSSQTAVRSTSGDSLVRRLGLFDLILLGVGASIGAGVFVVTGTVARDAGPGVTISFLLAGASCVLNALCYAELSSRFPAVVGGAYMYSYSAFNEITAFLVFVQLMLDYHIGAASISRSLASYAVALLELFPALKGSIPLWMGSGKELLGGLLSLNILAPILLALLTLVLCQGVRESSAVNSVMTATKVVIVLVVICAGAFEIDVANWSPFAPNGFKAVLTGATVVFFSYVGFDAVANSAEESKNPQRDLPIGIMGSLLVCISLYIGVCLVLTGMVPFSLLSEDAPLAEAFSSKGMKFVSILISIGAVAGLTTTLLVGLYVQSRLYLGLGRDGLLPSIFSRIHPTLHTPLHSQIWCGIVAGVLAGIFNVHSLSHILSVGTLTGYSVVAACVVALRLNDKKDRESSNRWTSSWQEGVICLVIIACSGFGAGVFYRFSASVIFILLSVGVAVVASAVLHYRQAYALPLGSGFSCPGVPIVPSVCIFFNIFLFAQLHYEAWIRFVVVSVLATAVYALYGQYHADPSMLDYQRAPETESDA.

The transit peptide at 1–41 directs the protein to the chloroplast; the sequence is MGGHEGFSNQRLSSATWFSHFRASALRSKSLPPPSSQTAVR. Helical transmembrane passes span 53–73, 81–101, 113–135, 155–175, 181–201, 215–235, 250–270, 284–304, 333–353, 406–428, 444–464, 467–487, 502–522, and 528–548; these read GLFD…VFVV, AGPG…LNAL, VVGG…LVFV, YAVA…LWMG, LGGL…LTLV, VMTA…AFEI, AVLT…AVAN, IGIM…CLVL, ILIS…GLYV, HILS…ALRL, WQEG…AGVF, FSAS…ASAV, FSCP…IFLF, and EAWI…ALYG.

Belongs to the amino acid-polyamine-organocation (APC) superfamily. Cationic amino acid transporter (CAT) (TC 2.A.3.3) family. In terms of tissue distribution, expressed in roots, stems, flowers, and leaves.

The protein localises to the plastid. It is found in the chloroplast membrane. Permease involved in the transport of the cationic amino acids. In Arabidopsis thaliana (Mouse-ear cress), this protein is Cationic amino acid transporter 9, chloroplastic (CAT9).